The primary structure comprises 620 residues: 1-deoxy-D-xylulose-5-phosphate synthase (620 aa).

Residues His-75 and 116-118 (AHS) contribute to the thiamine diphosphate site. Asp-147 lines the Mg(2+) pocket. Residues 148–149 (GA), Asn-177, Tyr-284, and Glu-366 contribute to the thiamine diphosphate site. Position 177 (Asn-177) interacts with Mg(2+).

It belongs to the transketolase family. DXPS subfamily. As to quaternary structure, homodimer. Requires Mg(2+) as cofactor. It depends on thiamine diphosphate as a cofactor.

The catalysed reaction is D-glyceraldehyde 3-phosphate + pyruvate + H(+) = 1-deoxy-D-xylulose 5-phosphate + CO2. It functions in the pathway metabolic intermediate biosynthesis; 1-deoxy-D-xylulose 5-phosphate biosynthesis; 1-deoxy-D-xylulose 5-phosphate from D-glyceraldehyde 3-phosphate and pyruvate: step 1/1. Its function is as follows. Catalyzes the acyloin condensation reaction between C atoms 2 and 3 of pyruvate and glyceraldehyde 3-phosphate to yield 1-deoxy-D-xylulose-5-phosphate (DXP). This is 1-deoxy-D-xylulose-5-phosphate synthase from Bordetella pertussis (strain Tohama I / ATCC BAA-589 / NCTC 13251).